A 98-amino-acid chain; its full sequence is Large ribosomal subunit protein uL23 (98 aa).

It belongs to the universal ribosomal protein uL23 family. Part of the 50S ribosomal subunit. Contacts protein L29, and trigger factor when it is bound to the ribosome.

Functionally, one of the early assembly proteins it binds 23S rRNA. One of the proteins that surrounds the polypeptide exit tunnel on the outside of the ribosome. Forms the main docking site for trigger factor binding to the ribosome. The polypeptide is Large ribosomal subunit protein uL23 (Maricaulis maris (strain MCS10) (Caulobacter maris)).